The primary structure comprises 170 residues: Inosine/xanthosine triphosphatase (170 aa).

This sequence belongs to the YjjX NTPase family. Homodimer. The cofactor is Mg(2+). Mn(2+) serves as cofactor.

It carries out the reaction XTP + H2O = XDP + phosphate + H(+). It catalyses the reaction ITP + H2O = IDP + phosphate + H(+). Its function is as follows. Phosphatase that hydrolyzes non-canonical purine nucleotides such as XTP and ITP to their respective diphosphate derivatives. Probably excludes non-canonical purines from DNA/RNA precursor pool, thus preventing their incorporation into DNA/RNA and avoiding chromosomal lesions. This chain is Inosine/xanthosine triphosphatase, found in Aliivibrio fischeri (strain MJ11) (Vibrio fischeri).